A 136-amino-acid chain; its full sequence is Large ribosomal subunit protein uL16c (136 aa).

Residues 1–17 (MLSPKRVKFRKQHRGRM) show a composition bias toward basic residues. Residues 1-25 (MLSPKRVKFRKQHRGRMKGISTRGN) are disordered.

The protein belongs to the universal ribosomal protein uL16 family. In terms of assembly, part of the 50S ribosomal subunit.

Its subcellular location is the plastid. The protein localises to the chloroplast. The chain is Large ribosomal subunit protein uL16c from Anthoceros angustus (Hornwort).